Reading from the N-terminus, the 201-residue chain is 3-isopropylmalate dehydratase small subunit (201 aa).

Belongs to the LeuD family. LeuD type 1 subfamily. Heterodimer of LeuC and LeuD.

The enzyme catalyses (2R,3S)-3-isopropylmalate = (2S)-2-isopropylmalate. Its pathway is amino-acid biosynthesis; L-leucine biosynthesis; L-leucine from 3-methyl-2-oxobutanoate: step 2/4. In terms of biological role, catalyzes the isomerization between 2-isopropylmalate and 3-isopropylmalate, via the formation of 2-isopropylmaleate. The polypeptide is 3-isopropylmalate dehydratase small subunit (Nitrobacter winogradskyi (strain ATCC 25391 / DSM 10237 / CIP 104748 / NCIMB 11846 / Nb-255)).